We begin with the raw amino-acid sequence, 126 residues long: MAIVGLGTDIAEIERVEKALSRSGDAFAERILSQSEFERYQGLKQKGRFLAKRFAAKEAASKALGTGISHGVTFHDFTISNDDNGKPILTLSGKALVLSQQSSVSHIHLTISDERHYAVATVIFES.

The Mg(2+) site is built by Asp9 and Glu58.

This sequence belongs to the P-Pant transferase superfamily. AcpS family. It depends on Mg(2+) as a cofactor.

It localises to the cytoplasm. The enzyme catalyses apo-[ACP] + CoA = holo-[ACP] + adenosine 3',5'-bisphosphate + H(+). In terms of biological role, transfers the 4'-phosphopantetheine moiety from coenzyme A to a Ser of acyl-carrier-protein. The polypeptide is Holo-[acyl-carrier-protein] synthase (Aliivibrio salmonicida (strain LFI1238) (Vibrio salmonicida (strain LFI1238))).